Reading from the N-terminus, the 135-residue chain is ARGOS-like protein (135 aa).

An organ Size Related (OSR) domain region spans residues 71–122 (FSLESMVVLVGLTASLLILPLILPPLPPPPFMLLLIPIGIMVLLMVLAFMPS). 2 helical membrane-spanning segments follow: residues 76 to 96 (MVVLVGLTASLLILPLILPPL) and 100 to 120 (PFMLLLIPIGIMVLLMVLAFM).

The protein belongs to the plant organ size related (OSR) protein family. In terms of tissue distribution, expressed in cotyledons, roots, flowers, siliques and leaves.

The protein resides in the membrane. It is found in the nucleus. Its subcellular location is the cytoplasm. It localises to the endoplasmic reticulum. Functionally, promotes cell expansion-dependent organ growth, probably via a brassinosteroids signaling pathway. Acts downstream of BRI1. The polypeptide is ARGOS-like protein (ARL) (Arabidopsis thaliana (Mouse-ear cress)).